The primary structure comprises 699 residues: Elongation factor G (699 aa).

The 283-residue stretch at 10-292 (NRTRNIGIMA…AVIDYLPSPT (283 aa)) folds into the tr-type G domain. GTP is bound by residues 19–26 (AHIDAGKT), 90–94 (DTPGH), and 144–147 (NKMD). Positions 292–312 (TDVPAIRGEEDDGSEGSRSAS) are disordered.

It belongs to the TRAFAC class translation factor GTPase superfamily. Classic translation factor GTPase family. EF-G/EF-2 subfamily.

Its subcellular location is the cytoplasm. Functionally, catalyzes the GTP-dependent ribosomal translocation step during translation elongation. During this step, the ribosome changes from the pre-translocational (PRE) to the post-translocational (POST) state as the newly formed A-site-bound peptidyl-tRNA and P-site-bound deacylated tRNA move to the P and E sites, respectively. Catalyzes the coordinated movement of the two tRNA molecules, the mRNA and conformational changes in the ribosome. This is Elongation factor G from Coxiella burnetii (strain RSA 331 / Henzerling II).